Consider the following 115-residue polypeptide: Transmembrane protein 218 (115 aa).

The next 3 helical transmembrane spans lie at 5–25 (VLGVGAGVFILALLWVAVLLL), 38–58 (FSVIFLFFGAVIITSVLLLFP), and 81–101 (YVLLAFLSAIFLGGLFLVLIH).

It belongs to the TMEM218 family. In terms of assembly, interacts with TMEM67.

It localises to the membrane. It is found in the cell projection. The protein localises to the cilium. Functionally, may be involved in ciliary biogenesis or function. The sequence is that of Transmembrane protein 218 (TMEM218) from Homo sapiens (Human).